A 341-amino-acid chain; its full sequence is Dihydroorotate dehydrogenase (quinone) (341 aa).

FMN contacts are provided by residues 59 to 63 and Thr-83; that span reads AGLDK. Lys-63 provides a ligand contact to substrate. 108-112 provides a ligand contact to substrate; sequence NRMGF. Residues Asn-136 and Asn-169 each contribute to the FMN site. Asn-169 lines the substrate pocket. The active-site Nucleophile is Ser-172. Residue Asn-174 participates in substrate binding. 2 residues coordinate FMN: Lys-214 and Thr-242. Residue 243 to 244 participates in substrate binding; the sequence is NT. FMN is bound by residues Gly-265, Gly-294, and 315–316; that span reads YS.

Belongs to the dihydroorotate dehydrogenase family. Type 2 subfamily. In terms of assembly, monomer. FMN serves as cofactor.

Its subcellular location is the cell membrane. It catalyses the reaction (S)-dihydroorotate + a quinone = orotate + a quinol. It functions in the pathway pyrimidine metabolism; UMP biosynthesis via de novo pathway; orotate from (S)-dihydroorotate (quinone route): step 1/1. In terms of biological role, catalyzes the conversion of dihydroorotate to orotate with quinone as electron acceptor. This chain is Dihydroorotate dehydrogenase (quinone), found in Neisseria meningitidis serogroup C (strain 053442).